The sequence spans 410 residues: WD repeat and FYVE domain-containing protein 1 (410 aa).

WD repeat units lie at residues G22–P61, T66–N105, A112–G150, F153–I192, G197–L236, and G240–P279. The segment at W281–K352 adopts an FYVE-type zinc-finger fold. Residues C287, C290, C314, C317, C322, C325, C344, and C347 each contribute to the Zn(2+) site. The WD 7 repeat unit spans residues E364–L403. Phosphoserine is present on S408.

Binds PtdIns3P in vitro with high specificity over other phosphoinositides. Interacts (via WD repeat 2) with tyrosine-phosphorylated TLR3 (via TIR domain) in response to poly(I:C). Interacts with TLR4 in response to LPS. Interacts with TICAM1 in response to poly(I:C).

The protein resides in the early endosome. Positively regulates TLR3- and TLR4-mediated signaling pathways by bridging the interaction between TLR3 or TLR4 and TICAM1. Promotes TLR3/4 ligand-induced activation of transcription factors IRF3 and NF-kappa-B, as well as the production of IFN-beta and inflammatory cytokines. This chain is WD repeat and FYVE domain-containing protein 1 (Wdfy1), found in Mus musculus (Mouse).